We begin with the raw amino-acid sequence, 133 residues long: Small ribosomal subunit protein uS8 (133 aa).

This sequence belongs to the universal ribosomal protein uS8 family. As to quaternary structure, part of the 30S ribosomal subunit. Contacts proteins S5 and S12.

In terms of biological role, one of the primary rRNA binding proteins, it binds directly to 16S rRNA central domain where it helps coordinate assembly of the platform of the 30S subunit. This chain is Small ribosomal subunit protein uS8, found in Gloeobacter violaceus (strain ATCC 29082 / PCC 7421).